The sequence spans 90 residues: uncharacterized protein (90 aa).

An N-terminal signal peptide occupies residues 1-18 (MSRALFAVVLAFPLIALA).

This is an uncharacterized protein from Escherichia coli (strain K12).